The primary structure comprises 130 residues: Small ribosomal subunit protein uS8 (130 aa).

It belongs to the universal ribosomal protein uS8 family. In terms of assembly, part of the 30S ribosomal subunit. Contacts proteins S5 and S12.

In terms of biological role, one of the primary rRNA binding proteins, it binds directly to 16S rRNA central domain where it helps coordinate assembly of the platform of the 30S subunit. The sequence is that of Small ribosomal subunit protein uS8 from Shigella boydii serotype 18 (strain CDC 3083-94 / BS512).